Here is a 247-residue protein sequence, read N- to C-terminus: UPF0246 protein CD630_18230 (247 aa).

The protein belongs to the UPF0246 family.

The polypeptide is UPF0246 protein CD630_18230 (Clostridioides difficile (strain 630) (Peptoclostridium difficile)).